Reading from the N-terminus, the 105-residue chain is Nucleoid-associated protein SE_2306 (105 aa).

The disordered stretch occupies residues Met-1–Gly-40. A compositionally biased stretch (low complexity) spans Met-7–Lys-16. A compositionally biased stretch (basic and acidic residues) spans Met-21–Val-33.

The protein belongs to the YbaB/EbfC family. In terms of assembly, homodimer.

The protein localises to the cytoplasm. Its subcellular location is the nucleoid. Its function is as follows. Binds to DNA and alters its conformation. May be involved in regulation of gene expression, nucleoid organization and DNA protection. The protein is Nucleoid-associated protein SE_2306 of Staphylococcus epidermidis (strain ATCC 12228 / FDA PCI 1200).